The chain runs to 489 residues: Protein LMBR1L (489 aa).

The Extracellular segment spans residues 1–21 (MEAPDYEVLSVREQLFHERIR). Residues 1 to 59 (MEAPDYEVLSVREQLFHERIRECIISTLLFATLYILCHIFLTRFKKPAEFTTVDDEDAT) form an interaction with LGB region. Positions 1 to 76 (MEAPDYEVLS…LCTFTLAIAL (76 aa)) are LCN1-binding. The chain crosses the membrane as a helical span at residues 22 to 42 (ECIISTLLFATLYILCHIFLT). Topologically, residues 43–66 (RFKKPAEFTTVDDEDATVNKIALE) are cytoplasmic. The helical transmembrane segment at 67–87 (LCTFTLAIALGAVLLLPFSII) threads the bilayer. At 88–114 (SNEVLLSLPRNYYIQWLNGSLIHGLWN) the chain is on the extracellular side. A helical transmembrane segment spans residues 115–135 (LVFLFSNLSLIFLMPFAYFFT). Over 136–154 (ESEGFAGSRKGVLGRVYET) the chain is Cytoplasmic. Residues 155 to 175 (VVMLMLLTLLVLGMVWVASAI) form a helical membrane-spanning segment. Residues 176–196 (VDKNKANRESLYDFWEYYLPY) are Extracellular-facing. The helical transmembrane segment at 197–217 (LYSCISFLGVLLLLVCTPLGL) threads the bilayer. Residues 218–305 (ARMFSVTGKL…NLGYPLAMLC (88 aa)) are Cytoplasmic-facing. Residues 306–326 (LLVLTGLSVLIVAIHILELLI) traverse the membrane as a helical segment. Topologically, residues 327-350 (DEAAMPRGMQGTSLGQVSFSKLGS) are extracellular. Residues 351 to 371 (FGAVIQVVLIFYLMVSSVVGF) form a helical membrane-spanning segment. Residues 372-388 (YSSPLFRSLRPRWHDTA) are Cytoplasmic-facing. A helical membrane pass occupies residues 389–409 (MTQIIGNCVCLLVLSSALPVF). The Extracellular portion of the chain corresponds to 410–431 (SRTLGLTRFDLLGDFGRFNWLG). The chain crosses the membrane as a helical span at residues 432-452 (NFYIVFLYNAAFAGLTTLCLV). At 453–489 (KTFTAAVRAELIRAFGLDRLPLPVSGFPQASRKTQHQ) the chain is on the cytoplasmic side.

It belongs to the LIMR family. Dimer. Can also form higher oligomers. Interacts with LCN1; this interaction mediates the endocytosis of LCN1. Interacts with UBAC2, FAF2, VCP, AMFR, ZNRF3, CTNNB1, LRP6, GSK3A and GSK3B. Interacts with DVL2 and RNF43. Interaction with SCGB1A1 has been observed in PubMed:16423471, but not in PubMed:23964685. Interaction with LGB which mediates the endocytosis of LGB has been observed in PubMed:17991420, but not in PubMed:23964685. As to expression, expressed in testis, pituitary gland, adrenal gland, trachea, placenta, thymus, cerebellum, stomach, mammary gland, spinal cord. A weaker expression is detected in colon, pancreas, and prostate.

Its subcellular location is the cell membrane. The protein localises to the endoplasmic reticulum membrane. Functionally, plays an essential role in lymphocyte development by negatively regulating the canonical Wnt signaling pathway. In association with UBAC2 and E3 ubiquitin-protein ligase AMFR, promotes the ubiquitin-mediated degradation of CTNNB1 and Wnt receptors FZD6 and LRP6. LMBR1L stabilizes the beta-catenin destruction complex that is required for regulating CTNNB1 levels. Acts as a LCN1 receptor and can mediate its endocytosis. The chain is Protein LMBR1L (LMBR1L) from Homo sapiens (Human).